Reading from the N-terminus, the 265-residue chain is Protein Rv2993c (265 aa).

Residues Glu114, Glu116, and Asp145 each contribute to the a divalent metal cation site.

It in the C-terminal section; belongs to the FAH family. Requires a divalent metal cation as cofactor.

The protein is Protein Rv2993c of Mycobacterium tuberculosis (strain ATCC 25618 / H37Rv).